Reading from the N-terminus, the 411-residue chain is Floricaula/leafy-like protein (411 aa).

Residues 220–259 (PDTNYGSEQTKACKKQKRRRSKDSGEDGEERQREHPFIVT) are disordered. The segment covering 231–240 (ACKKQKRRRS) has biased composition (basic residues). Residues 241–255 (KDSGEDGEERQREHP) show a composition bias toward basic and acidic residues. DNA-binding regions lie at residues 252–256 (REHPF), 321–328 (NKPKMRHY), and 392–395 (YVPT).

This sequence belongs to the FLO/LFY family. In terms of tissue distribution, expressed in vegetative buds and male cones but not in female cones, vascular tissue, roots or secondary needles.

It localises to the nucleus. In terms of biological role, probable transcription factor. The sequence is that of Floricaula/leafy-like protein (FLL) from Pinus radiata (Monterey pine).